The primary structure comprises 294 residues: Bifunctional protein FolD (294 aa).

NADP(+) is bound by residues Gly166–Ser168, Ser191, and Ile232.

This sequence belongs to the tetrahydrofolate dehydrogenase/cyclohydrolase family. Homodimer.

It carries out the reaction (6R)-5,10-methylene-5,6,7,8-tetrahydrofolate + NADP(+) = (6R)-5,10-methenyltetrahydrofolate + NADPH. The catalysed reaction is (6R)-5,10-methenyltetrahydrofolate + H2O = (6R)-10-formyltetrahydrofolate + H(+). The protein operates within one-carbon metabolism; tetrahydrofolate interconversion. Its function is as follows. Catalyzes the oxidation of 5,10-methylenetetrahydrofolate to 5,10-methenyltetrahydrofolate and then the hydrolysis of 5,10-methenyltetrahydrofolate to 10-formyltetrahydrofolate. The chain is Bifunctional protein FolD from Bradyrhizobium sp. (strain ORS 278).